We begin with the raw amino-acid sequence, 540 residues long: Glucose-6-phosphate isomerase (540 aa).

The active-site Proton donor is Glu-346. Active-site residues include His-377 and Lys-505.

Belongs to the GPI family.

The protein localises to the cytoplasm. It carries out the reaction alpha-D-glucose 6-phosphate = beta-D-fructose 6-phosphate. It functions in the pathway carbohydrate biosynthesis; gluconeogenesis. It participates in carbohydrate degradation; glycolysis; D-glyceraldehyde 3-phosphate and glycerone phosphate from D-glucose: step 2/4. In terms of biological role, catalyzes the reversible isomerization of glucose-6-phosphate to fructose-6-phosphate. The sequence is that of Glucose-6-phosphate isomerase from Francisella tularensis subsp. tularensis (strain WY96-3418).